The chain runs to 112 residues: Urease subunit gamma (112 aa).

It belongs to the urease gamma subunit family. Heterotrimer of UreA (gamma), UreB (beta) and UreC (alpha) subunits. Three heterotrimers associate to form the active enzyme.

Its subcellular location is the cytoplasm. It catalyses the reaction urea + 2 H2O + H(+) = hydrogencarbonate + 2 NH4(+). Its pathway is nitrogen metabolism; urea degradation; CO(2) and NH(3) from urea (urease route): step 1/1. The chain is Urease subunit gamma from Gloeothece citriformis (strain PCC 7424) (Cyanothece sp. (strain PCC 7424)).